We begin with the raw amino-acid sequence, 836 residues long: Phenylalanine--tRNA ligase beta subunit (836 aa).

Residues 44–160 enclose the tRNA-binding domain; sequence PETTGPLVIG…EIAEPGTDAR (117 aa). In terms of domain architecture, B5 spans 420–495; it reads PSMPQIRMKT…RLEGLEDIPT (76 aa). Residues Asp473, Asp479, Glu482, and Glu483 each coordinate Mg(2+). Positions 742 to 835 constitute an FDX-ACB domain; that stretch reads SAFPVLHQDL…AAELFGATMR (94 aa).

This sequence belongs to the phenylalanyl-tRNA synthetase beta subunit family. Type 1 subfamily. Tetramer of two alpha and two beta subunits. Mg(2+) is required as a cofactor.

It localises to the cytoplasm. The catalysed reaction is tRNA(Phe) + L-phenylalanine + ATP = L-phenylalanyl-tRNA(Phe) + AMP + diphosphate + H(+). This Corynebacterium diphtheriae (strain ATCC 700971 / NCTC 13129 / Biotype gravis) protein is Phenylalanine--tRNA ligase beta subunit.